The primary structure comprises 716 residues: MALTAALKAQIAAWYKALQEQIPDFIPRAPQRQMIADVAKTLAGEEGRHLAIEAPTGVGKTLSYLIPGIAIAREEQKTLVVSTANVALQDQIYSKDLPLLKKIIPDLKFTAAFGRGRYVCPRNLTALASTEPTQQDLLAFLDDELTPNNQEEQKRCAKLKGDLDTYKWDGLRDHTDIAIDDDLWRRLSTDKASCLNRNCYYYRECPFFVARREIQEAEVVVANHALVMAAMESEAVLPDPKNLLLVLDEGHHLPDVARDALEMSAEITAPWYRLQLDLFTKLVATCMEQFRPKTIPPLAIPERLNAHCEELYELIASLNNILNLYMPAGQEAEHRFAMGELPDEVLEICQRLAKLTEMLRGLAELFLNDLSEKTGSHDIVRLHRLILQMNRALGMFEAQSKLWRLASLAQSSGAPVTKWATREEREGQLHLWFHCVGIRVSDQLERLLWRSIPHIIVTSATLRSLNSFSRLQEMSGLKEKAGDRFVALDSPFNHCEQGKIVIPRMRVEPSIDNEEQHIAEMAAFFREQVESKKHLGMLVLFASGRAMQRFLDYVTDLRLMLLVQGDQPRYRLVELHRKRVANGERSVLVGLQSFAEGLDLKGDLLSQVHIHKIAFPPIDSPVVITEGEWLKSLNRYPFEVQSLPSASFNLIQQVGRLIRSHGCWGEVVIYDKRLLTKNYGKRLLDALPVFPIEQPEVPEGIVKKKEKTKSPRRRRR.

In terms of domain architecture, Helicase ATP-binding spans 17–294; the sequence is ALQEQIPDFI…TCMEQFRPKT (278 aa). 54 to 61 contributes to the ATP binding site; that stretch reads APTGVGKT. Residue Cys-120 participates in [4Fe-4S] cluster binding. Residues 131–134 carry the DEAH box motif; that stretch reads EPTQ. [4Fe-4S] cluster contacts are provided by Cys-194, Cys-199, and Cys-205. A DEAH box motif is present at residues 248 to 251; the sequence is DEGH. The Helicase C-terminal domain occupies 517-698; that stretch reads HIAEMAAFFR…VFPIEQPEVP (182 aa).

Belongs to the helicase family. DinG subfamily. Type 1 sub-subfamily. It depends on [4Fe-4S] cluster as a cofactor.

It catalyses the reaction Couples ATP hydrolysis with the unwinding of duplex DNA at the replication fork by translocating in the 5'-3' direction. This creates two antiparallel DNA single strands (ssDNA). The leading ssDNA polymer is the template for DNA polymerase III holoenzyme which synthesizes a continuous strand.. The enzyme catalyses ATP + H2O = ADP + phosphate + H(+). In terms of biological role, DNA-dependent ATPase and 5'-3' DNA helicase. Unwinds D-loops, R-loops, forked DNA and G-quadruplex DNA. In Escherichia coli O6:H1 (strain CFT073 / ATCC 700928 / UPEC), this protein is ATP-dependent DNA helicase DinG.